The chain runs to 133 residues: Small ribosomal subunit protein uS8 (133 aa).

It belongs to the universal ribosomal protein uS8 family. In terms of assembly, part of the 30S ribosomal subunit. Contacts proteins S5 and S12.

Its function is as follows. One of the primary rRNA binding proteins, it binds directly to 16S rRNA central domain where it helps coordinate assembly of the platform of the 30S subunit. This is Small ribosomal subunit protein uS8 from Endomicrobium trichonymphae.